We begin with the raw amino-acid sequence, 989 residues long: Voltage-gated delayed rectifier potassium channel KCNH1 (989 aa).

Topologically, residues 1 to 220 (MTMAGGRRGL…LHYCVFKTTW (220 aa)) are cytoplasmic. The PAS domain occupies 14–94 (QNTFLENIVR…QTFENYEMNS (81 aa)). The region spanning 93–145 (NSFEILMYKKNRTPVWFFVKIAPIRNEQDKVVLFLCTFSDITAFKQPIEDDSC) is the PAC domain. Residues 151–162 (FARLTRALTSSR) form a required for phosphatidylinositol bisphosphate binding region. The chain crosses the membrane as a helical span at residues 221–241 (DWIILILTFYTAILVPYNVSF). The Extracellular segment spans residues 242–248 (KTRQNNV). Residues 249 to 269 (AWLVVDSIVDVIFLVDIVLNF) traverse the membrane as a helical segment. Topologically, residues 270 to 290 (HTTFVGPAGEVISDPKLIRMN) are cytoplasmic. A helical membrane pass occupies residues 291–309 (YLKTWFVIDLLSCLPYDVI). Residues 310–345 (NAFENVDEVSAFMGDPGKIGFADQIPPPLEGRESQG) are Extracellular-facing. Residues 346–368 (ISSLFSSLKVVRLLRLGRVARKL) form a helical; Voltage-sensor membrane-spanning segment. The Cytoplasmic segment spans residues 369-377 (DHYIEYGAA). A helical transmembrane segment spans residues 378–399 (VLVLLVCVFGLAAHWMACIWYS). Topologically, residues 400–448 (IGDYEIFDEDTKTIRNNSWLYQLALDIGTPYQFNGSGSGKWEGGPSKNS) are extracellular. Residues Asn-415 and Asn-433 are each glycosylated (N-linked (GlcNAc...) asparagine). The segment at residues 449-470 (VYISSLYFTMTSLTSVGFGNIA) is an intramembrane region (pore-forming). The short motif at 463-468 (SVGFGN) is the Selectivity filter element. Residues 471–477 (PSTDIEK) lie on the Extracellular side of the membrane. The chain crosses the membrane as a helical span at residues 478 to 498 (IFAVAIMMIGSLLYATIFGNV). Residues 499–989 (TTIFQQMYAN…ESDRDIFGAS (491 aa)) lie on the Cytoplasmic side of the membrane. A calmodulin-binding region spans residues 673-770 (KRDALQKVLE…LDDLDVEKGN (98 aa)). Positions 699 to 701 (YNL) are interaction with cyclic nucleotide-binding pocket. 2 stretches are compositionally biased toward basic and acidic residues: residues 857–879 (ESME…KTDS) and 887–901 (SDLR…RSPQ). Disordered stretches follow at residues 857 to 905 (ESME…DRSP) and 961 to 989 (RGSA…FGAS). A CAD (involved in subunit assembly) region spans residues 924–964 (ATVLEVKYELKEDIKALNAKMTSIEKQLSEILRILMSRGSA). Residues 962–979 (GSAQSPQETGEISRPQSP) show a composition bias toward polar residues. 3 positions are modified to phosphoserine: Ser-974, Ser-978, and Ser-981. A compositionally biased stretch (basic and acidic residues) spans 980 to 989 (ESDRDIFGAS).

It belongs to the potassium channel family. H (Eag) (TC 1.A.1.20) subfamily. Kv10.1/KCNH1 sub-subfamily. In terms of assembly, homomultimer. The potassium channel is composed of a homo- or heterotetrameric complex of pore-forming alpha subunits that can associate with modulating beta subunits. Heteromultimer with KCNH5/EAG2. Interacts with ALG10B. Interacts with RABEP1. Interacts (via C-terminus) with CTTN. Interacts (via C-terminal cytoplasmic region) with Ca(2+)-bound calmodulin. In terms of processing, channel activity is regulated via tyrosine phosphorylation/dephosphorylation by SRC and PTPN6. In terms of tissue distribution, detected in brain (at protein level). Highly expressed in olfactory bulb. Detected in brain cortex, hippocampus, brain stem, striatum, thalamus, hypothalamus and spinal cord.

The protein localises to the cell membrane. It localises to the nucleus inner membrane. The protein resides in the cell projection. Its subcellular location is the dendrite. It is found in the axon. The protein localises to the presynaptic cell membrane. It localises to the perikaryon. The protein resides in the postsynaptic density membrane. Its subcellular location is the early endosome membrane. The catalysed reaction is K(+)(in) = K(+)(out). Its activity is regulated as follows. Channel activity is inhibited by interaction with Ca(2+)-bound calmodulin. Interaction of a single pore-forming alpha subunit with a calmodulin chain is sufficient to promote channel closure. Channel activity is not regulated by cyclic nucleotides. Channel activity is inhibited by binding intracellular phosphatidylinositol-3,5-bisphosphate and phosphatidylinositol-4,5-bisphosphate (PIP2), but is not inhibited by phosphatidylinositol 4-phosphate. Pore-forming (alpha) subunit of a voltage-gated delayed rectifier potassium channel that mediates outward-rectifying potassium currents which, on depolarization, reaches a steady-state level and do not inactivate. The activation kinetics depend on the prepulse potential and external divalent cation concentration. With negative prepulses, the current activation is delayed and slowed down several fold, whereas more positive prepulses speed up activation. The time course of activation is biphasic with a fast and a slowly activating current component. Activates at more positive membrane potentials and exhibit a steeper activation curve. Channel properties are modulated by subunit assembly. Mediates IK(NI) current in myoblasts. Involved in the regulation of cell proliferation and differentiation, in particular adipogenic and osteogenic differentiation in bone marrow-derived mesenchymal stem cells (MSCs). This Mus musculus (Mouse) protein is Voltage-gated delayed rectifier potassium channel KCNH1.